A 633-amino-acid polypeptide reads, in one-letter code: Chitinase 2 (633 aa).

The 452-residue stretch at 151-602 (PKLSAYITDW…NAAREGLGYV (452 aa)) folds into the GH18 domain. Residues 275 to 276 (QN) and 306 to 309 (GGWS) contribute to the chitin site. The Proton donor role is filled by glutamate 349. Chitin contacts are provided by residues tyrosine 350, 422–425 (MSYD), and tryptophan 582.

The protein belongs to the glycosyl hydrolase 18 family. Semipurified toxin complex consists of at least YenA1-YenA2-YenB-YenC1-YenC2-Chi1-Chi2. The Yen-TC:K9 subcomplex is about 26 nm tall and 22 nm in diameter with 5-fold symmetry and 5 copies of YenA1, YenA2, Chi1 and Chi2; the chitinase subunits may be solvent accessible on the exterior the complex. The Yen-TC:K9 subcomplex has no insecticidal activity. The native complex with additional YenB, YenC1 and YenC2 subunits is 16 nm taller and is insecticidal; the toxicity-conferring subunits are present at about 1 copy each.

The protein localises to the secreted. It catalyses the reaction Random endo-hydrolysis of N-acetyl-beta-D-glucosaminide (1-&gt;4)-beta-linkages in chitin and chitodextrins.. Toxin complex is secreted when grown at 25 degrees Celsius or less; at higher temperatures the proteins are present intracellularly but not secreted. Its function is as follows. Part of an orally active toxin complex (TC) with strong insecticidal effects on larvae of the Coleoptera Costelytra zealandica, Acrossidius tasmania and Adoryphorus couloni and some Lepidoptera larvae. The TC has an endochitinase activity. This subunit might aid infection by degradation of the larval peritrophic membrane. The chain is Chitinase 2 from Yersinia entomophaga.